A 93-amino-acid chain; its full sequence is Small ribosomal subunit protein uS19 (93 aa).

This sequence belongs to the universal ribosomal protein uS19 family.

In terms of biological role, protein S19 forms a complex with S13 that binds strongly to the 16S ribosomal RNA. This Rubrobacter xylanophilus (strain DSM 9941 / JCM 11954 / NBRC 16129 / PRD-1) protein is Small ribosomal subunit protein uS19.